A 474-amino-acid chain; its full sequence is tRNA-2-methylthio-N(6)-dimethylallyladenosine synthase (474 aa).

The MTTase N-terminal domain occupies 3–120 (KKLHIKTWGC…LPEMIEQIQR (118 aa)). Positions 12, 49, 83, 157, 161, and 164 each coordinate [4Fe-4S] cluster. Residues 143–375 (RADGPTAFVS…QDRITQQAMR (233 aa)) form the Radical SAM core domain. Residues 378-441 (RQMLGTVQRI…TNSLRGEFVR (64 aa)) enclose the TRAM domain.

It belongs to the methylthiotransferase family. MiaB subfamily. Monomer. It depends on [4Fe-4S] cluster as a cofactor.

It is found in the cytoplasm. The enzyme catalyses N(6)-dimethylallyladenosine(37) in tRNA + (sulfur carrier)-SH + AH2 + 2 S-adenosyl-L-methionine = 2-methylsulfanyl-N(6)-dimethylallyladenosine(37) in tRNA + (sulfur carrier)-H + 5'-deoxyadenosine + L-methionine + A + S-adenosyl-L-homocysteine + 2 H(+). Functionally, catalyzes the methylthiolation of N6-(dimethylallyl)adenosine (i(6)A), leading to the formation of 2-methylthio-N6-(dimethylallyl)adenosine (ms(2)i(6)A) at position 37 in tRNAs that read codons beginning with uridine. The sequence is that of tRNA-2-methylthio-N(6)-dimethylallyladenosine synthase from Shewanella frigidimarina (strain NCIMB 400).